Reading from the N-terminus, the 61-residue chain is MPRKALIAKQQRKQKYRTREYNRCQRCGRARAYYRKFGLCRICLRELAHEGKIPGVKKASW.

Zn(2+)-binding residues include Cys24, Cys27, Cys40, and Cys43.

Belongs to the universal ribosomal protein uS14 family. Zinc-binding uS14 subfamily. In terms of assembly, part of the 30S ribosomal subunit. Contacts proteins S3 and S10. Requires Zn(2+) as cofactor.

In terms of biological role, binds 16S rRNA, required for the assembly of 30S particles and may also be responsible for determining the conformation of the 16S rRNA at the A site. The polypeptide is Small ribosomal subunit protein uS14 (Rubrobacter xylanophilus (strain DSM 9941 / JCM 11954 / NBRC 16129 / PRD-1)).